We begin with the raw amino-acid sequence, 325 residues long: Ubiquitin thioesterase OTU1 (325 aa).

Positions 7–86 are UBX-like; that stretch reads RIRSKTGVEN…NVSSISSNPG (80 aa). The OTU domain occupies 123 to 246; sequence ATRRVTDDDN…GIHYDALSIC (124 aa). A cys-loop region spans residues 128 to 134; sequence TDDDNSC. The active site involves Asp-131. The active-site Nucleophile is Cys-134. Positions 185–195 are variable-loop; that stretch reads IQNPKNWGGAI. Positions 235-239 are his-loop; it reads YDGIH. Ile-238 provides a ligand contact to substrate. His-239 is an active-site residue. The tract at residues 265 to 270 is S2 site; it reads KDSLAK. A C2H2-type zinc finger spans residues 292-316; sequence LICLNCNKTLKGEKEAAIHASTTGH. The active site involves His-316.

Its subcellular location is the cytoplasm. The enzyme catalyses Thiol-dependent hydrolysis of ester, thioester, amide, peptide and isopeptide bonds formed by the C-terminal Gly of ubiquitin (a 76-residue protein attached to proteins as an intracellular targeting signal).. Its function is as follows. Hydrolase that can remove conjugated ubiquitin from proteins and may therefore play an important regulatory role at the level of protein turnover by preventing degradation. This is Ubiquitin thioesterase OTU1 (yod1) from Dictyostelium discoideum (Social amoeba).